Consider the following 126-residue polypeptide: Putative regulator AldR (126 aa).

Belongs to the RutC family.

Its function is as follows. Implicated in the regulation of isoleucine biosynthesis. The sequence is that of Putative regulator AldR (aldR) from Lactococcus lactis subsp. lactis (strain IL1403) (Streptococcus lactis).